The following is a 254-amino-acid chain: D-aminoacyl-tRNA deacylase (254 aa).

This sequence belongs to the DtdA deacylase family. In terms of assembly, monomer. It depends on Zn(2+) as a cofactor.

The catalysed reaction is a D-aminoacyl-tRNA + H2O = a tRNA + a D-alpha-amino acid + H(+). The enzyme catalyses glycyl-tRNA(Ala) + H2O = tRNA(Ala) + glycine + H(+). Its function is as follows. D-aminoacyl-tRNA deacylase with broad substrate specificity. By recycling D-aminoacyl-tRNA to D-amino acids and free tRNA molecules, this enzyme counteracts the toxicity associated with the formation of D-aminoacyl-tRNA entities in vivo. The protein is D-aminoacyl-tRNA deacylase of Methanococcus vannielii (strain ATCC 35089 / DSM 1224 / JCM 13029 / OCM 148 / SB).